We begin with the raw amino-acid sequence, 492 residues long: Thyroid hormone receptor alpha (492 aa).

The interval 1 to 33 (MEQKPSKVECGSDPEENSARSPDGKRKRKNGQC) is disordered. The interval 1–52 (MEQKPSKVECGSDPEENSARSPDGKRKRKNGQCPLKSSMSGYIPSYLDKDEQ) is modulating. Positions 53, 56, 70, 73, 91, 97, 107, and 110 each coordinate Zn(2+). NR C4-type zinc fingers lie at residues 53–73 (CVVCGDKATGYHYRCITCEGC) and 91–115 (CKYDSCCVIDKITRNQCQLCRFKKC). Positions 53–127 (CVVCGDKATG…VGMAMDLVLD (75 aa)) form a DNA-binding region, nuclear receptor. In terms of domain architecture, NR LBD spans 163–407 (EEWDLIHVAT…EGQQLLGMHV (245 aa)). Residues R228 and S277 each coordinate 3,3',5-triiodo-L-thyronine. The tract at residues 457-492 (AVCGEDDSSEASSLSSSSSDEDTEVFEDLAGKAASP) is disordered.

This sequence belongs to the nuclear hormone receptor family. NR1 subfamily. Binds DNA as a dimer; homodimer and heterodimer with RXRB. Interacts with NCOA3 and NCOA6 coactivators, leading to a strong increase of transcription of target genes. Probably interacts with SFPQ. Interacts with C1D. Interacts with AKAP13. Interacts with TP53INP2. Interacts with PER2. Isoform alpha-2 and isoform alpha-1 interact with TACC1, but the interaction with alpha-1 is weaker. The interaction with isoform alpha-1, but not alpha-2, is decreased in the presence of thyroid hormone T3.

It localises to the nucleus. It is found in the cytoplasm. Functionally, nuclear hormone receptor that can act as a repressor or activator of transcription. High affinity receptor for thyroid hormones, including triiodothyronine and thyroxine. This chain is Thyroid hormone receptor alpha (Thra), found in Rattus norvegicus (Rat).